The chain runs to 426 residues: MNKSESLYAAAQQLIPGGVNSPVRAFNGVGGTPLFIERADGAYLYDVDEQAYIDYVGSWGPMVLGHNHPSIRDAVIAAAERGLSFGAPTEMEVQMARLVTSLVPSMDMVRMVNSGTEATMSAIRLARGYTGRDKIIKFEGCYHGHADCLLVKAGSGALTLGQPNSPGVPADFARHTLTCVYNDLSSVRTTFEQYPDEIAAIIVEPVAGNMNCVPPLPDFLPGLRALCDEFGALFIIDEVMTGFRVALAGAQSHYGVVPDLTCLGKIIGGGMPVGAFGGKREVMQALAPTGPVYQAGTLSGNPIAMAAGFACLTEVAKPGVHEKLTALTNQLADGLLAAAKAENIPLVVNQAGGMFGLFFTDAESVTCYQDVMKCDVERFKRFFHMMLEEGIYLAPSAFEAGFMSLAHTPQDIERTIEAAQICFSRL.

An N6-(pyridoxal phosphate)lysine modification is found at K265.

It belongs to the class-III pyridoxal-phosphate-dependent aminotransferase family. HemL subfamily. In terms of assembly, homodimer. Pyridoxal 5'-phosphate serves as cofactor.

Its subcellular location is the cytoplasm. The catalysed reaction is (S)-4-amino-5-oxopentanoate = 5-aminolevulinate. It participates in porphyrin-containing compound metabolism; protoporphyrin-IX biosynthesis; 5-aminolevulinate from L-glutamyl-tRNA(Glu): step 2/2. The polypeptide is Glutamate-1-semialdehyde 2,1-aminomutase (Pectobacterium atrosepticum (strain SCRI 1043 / ATCC BAA-672) (Erwinia carotovora subsp. atroseptica)).